A 618-amino-acid polypeptide reads, in one-letter code: MPLMSNSERDKLESTLRRRFFYTPSFEIYGGVSGLFDLGPPGCQLQNNLIRLWREHFIMEENMLQVDGPMLTPYDVLKTSGHVDKFTDWMCRNPKTGEYYRADHLIEQTLKKRLLDKDVNPQDMKNMEKILTTIDGFSGPELNLVMQEYNINDPVTNDVLDALTSFNLMFETKIGASGQLKAFLRPETAQGQFLNFNKLLEINQGKIPFASASIGKSFRNEISPRSGLLRVREFLMAEIEHFVDPLNKSHAKFNEVLNEEIPLLSRRLQESGEVQLPVKMTIGEAVNSGMVENETLGYFMARVHQFLLNIGINKDKFRFRQHLKNEMAHYATDCWDGEILTSYGWIECVGCADRAAFDLTVHSKKTGRSLTVKQKLDTPKERTEWVVEVNKKFFGSKFKQKAKLIESVLSKFSQDELIRRHEELEKNGEFTCQVNGQIVKLDSSLVTIKMKTTLQHIREYIPNVIEPSFGLGRIIYCIFDHCFQVRVDSESRGFFSFPLQIAPIKVFVTTISNNDGFPAILKRISQALRKREIYFKIDDSNTSIGKKYARNDELGTPFGITIDFETIKDQTVTLRERNSMRQVRGTITDVISTIDKMLHNPDESDWDKSTFGLSPVKI.

Glycine is bound at residue Glu-187. ATP-binding positions include 219 to 221 and 230 to 231; these read RNE and RV. Position 238 (Glu-238) interacts with glycine. 347–348 serves as a coordination point for ATP; the sequence is EC. 466-468 serves as a coordination point for glycine; it reads EPS. Arg-473 is an ATP binding site.

Belongs to the class-II aminoacyl-tRNA synthetase family. As to quaternary structure, homodimer.

The protein resides in the cytoplasm. It carries out the reaction tRNA(Gly) + glycine + ATP = glycyl-tRNA(Gly) + AMP + diphosphate. The enzyme catalyses 2 ATP + H(+) = P(1),P(4)-bis(5'-adenosyl) tetraphosphate + diphosphate. Its function is as follows. Catalyzes the ATP-dependent ligation of glycine to the 3'-end of its cognate tRNA, via the formation of an aminoacyl-adenylate intermediate (Gly-AMP). Also produces diadenosine tetraphosphate (Ap4A), a universal pleiotropic signaling molecule needed for cell regulation pathways, by direct condensation of 2 ATPs. Thereby, may play a special role in Ap4A homeostasis. This is Glycine--tRNA ligase 2 (GRS2) from Saccharomyces cerevisiae (strain ATCC 204508 / S288c) (Baker's yeast).